A 900-amino-acid chain; its full sequence is MPQVDPELFDRGQFQAELALKSSPIAAFKKAIRQFREVLDNRFNSGRDIRRLIEDRAWCVDQILQQAWQRFDWGDDADITLVAVGGYGRGELHPYSDVDLLILLDSEDQESFREPIEGFLTLLWDIGLEVGQSVRSVQQCAEEARADLTVITTLMECRTICGPDSLRQRMLQVTGSAHMWPSKEFFLAKRHEQQRRHAKYNDTEYNLEPNVKGSPGGLRDIQTILWMARRQFGSLNLHALVREGFLVESECSMLASSQEFLWRVRYALHMLAGRAEDRLLFDHQRSIARLFGYEDNDVKLAVERFMQKYYRVVMAISELNDLIIQHFEEVILPCEQPVQIQPLNSRFQLRDGYIEVTHPNVFKRTPFALLEIFVLMAQHPEIKGVRADTIRLLRDSRHLIDDEFRHDIRNTSLFIELFKSSQGIHRNLRRMNRYGILGRYLPEFGHIIGQMQHDLFHIYTVDAHTLNLIKHLRKLNRPEMAEKYPLASKIIDRLPKPELIYIAGLYHDIAKGRGGDHSELGAVDAEAFCQSHQLPPWDTQLVSWLVQNHLVMSTTAQRKDLSDPQVIFDFAQLVGDQTHLDYLYVLTVADINATNPTLWNSWRASLLRQLYTETKRALRRGLENPVDREEQIRQTQTAALDQLVRNGIDQDDAEQLWSQLGDDYFLRHTAGDVAWHTEAILQHPDDGTPLVLIKETTQREFESGSQIFIYAADQHDFFAVTVAAMDQLNLSIQDARIITSTSQFTLDTYIVLDADGDSIGNNPERIAEIREGLIDALKNPDDYPTIIQRRVPRQLKHFAFAPQVTISTDALRQVSVLEVIAPDRPGLLARIGGIFLDFDLSVQNAKIATLGERVEDVFYITDARNQPLADPDLCKRLQAALVEQLSQDNGRDTLPTRINF.

A uridylyltransferase region spans residues 1–342; that stretch reads MPQVDPELFD…PCEQPVQIQP (342 aa). Positions 343 to 705 are uridylyl-removing; that stretch reads LNSRFQLRDG…TTQREFESGS (363 aa). One can recognise an HD domain in the interval 461–583; the sequence is VDAHTLNLIK…VGDQTHLDYL (123 aa). ACT domains lie at 706–789 and 816–891; these read QIFI…IIQR and VLEV…DNGR.

Belongs to the GlnD family. Mg(2+) serves as cofactor.

It catalyses the reaction [protein-PII]-L-tyrosine + UTP = [protein-PII]-uridylyl-L-tyrosine + diphosphate. The enzyme catalyses [protein-PII]-uridylyl-L-tyrosine + H2O = [protein-PII]-L-tyrosine + UMP + H(+). Uridylyltransferase (UTase) activity is inhibited by glutamine, while glutamine activates uridylyl-removing (UR) activity. Its function is as follows. Modifies, by uridylylation and deuridylylation, the PII regulatory proteins (GlnB and homologs), in response to the nitrogen status of the cell that GlnD senses through the glutamine level. Under low glutamine levels, catalyzes the conversion of the PII proteins and UTP to PII-UMP and PPi, while under higher glutamine levels, GlnD hydrolyzes PII-UMP to PII and UMP (deuridylylation). Thus, controls uridylylation state and activity of the PII proteins, and plays an important role in the regulation of nitrogen assimilation and metabolism. The protein is Bifunctional uridylyltransferase/uridylyl-removing enzyme of Pseudomonas aeruginosa (strain UCBPP-PA14).